A 435-amino-acid polypeptide reads, in one-letter code: Glutamine synthetase (435 aa).

The GS beta-grasp domain maps to 12-94 (KSIKYFMISY…VAADCVMDDR (83 aa)). The 336-residue stretch at 100–435 (PRVVLKRLVA…QWERDSTLDI (336 aa)) folds into the GS catalytic domain. Mg(2+)-binding residues include E123, E125, E180, and E187. G232 contributes to the L-glutamate binding site. A Mg(2+)-binding site is contributed by H236. S240 contributes to the ATP binding site. The L-glutamate site is built by R291 and R315. 2 residues coordinate ATP: R315 and R320. A Mg(2+)-binding site is contributed by E328. R330 lines the L-glutamate pocket.

Belongs to the glutamine synthetase family. As to quaternary structure, homooctamer. Mg(2+) is required as a cofactor.

It carries out the reaction L-glutamate + NH4(+) + ATP = L-glutamine + ADP + phosphate + H(+). In terms of biological role, catalyzes the ATP-dependent biosynthesis of glutamine from glutamate and ammonia. The sequence is that of Glutamine synthetase from Rhizobium leguminosarum bv. phaseoli.